Here is a 219-residue protein sequence, read N- to C-terminus: Large ribosomal subunit protein bL25 (219 aa).

Residues 176 to 219 (VTVVPPTDEPSEEEVEAMEGESATEEPEVVDEDKEDDEEENKED) are disordered. Residues 184 to 219 (EPSEEEVEAMEGESATEEPEVVDEDKEDDEEENKED) are compositionally biased toward acidic residues.

This sequence belongs to the bacterial ribosomal protein bL25 family. CTC subfamily. Part of the 50S ribosomal subunit; part of the 5S rRNA/L5/L18/L25 subcomplex. Contacts the 5S rRNA. Binds to the 5S rRNA independently of L5 and L18.

In terms of biological role, this is one of the proteins that binds to the 5S RNA in the ribosome where it forms part of the central protuberance. This Staphylococcus epidermidis (strain ATCC 12228 / FDA PCI 1200) protein is Large ribosomal subunit protein bL25.